The primary structure comprises 876 residues: MTGNELRARFLKFFEDRGHTVVPSSLLIPHNDPTLLFANAGMNQFKDCFLGMEDRGYTRATSSQKCVRAGGKHNDLENVGRTARHHTFFEMLGNFSFGDYFKKEAIAFAWEFLTKDLGLDKDRLYVTVYTDDDEAADIWHHQEGVPRERIFRFGEKDNFWSMGDTGPCGPCSEIFWDNGPEVGCGSPDCTVGCDCDRYMEIWNNVFMQFNRSADGTMTPLPKPSVDTGMGLERICTVMQGVKSNYDTDLLQGVIRHVERLSGKRYRENEKDDVSMRVIADHARATTFLICDGVLPSNEGRGYVLRRIMRRAARHAKMLGFAEPVLYRTVDAVNEMMGGSYPELLEREEYIKKVIRAEEERFAETLDRGLAILNDAVAQLKGEGKTVIPGETLFRLYDTFGFPTDLTADIVRAEGFTIDEPGFEACMGRQREQAREHWKGSGEEGIAAVHKELHNRGVRSVFVGYDEKCSYAAIGSILRGGSEVAEAKAGEDVEIITDRTPFYGESGGQAGDTGTISTGSAHVRVTGTIRPYPDLIVHRGTVVEGTIKTGEACDLKVASVDRDATARNHTATHLLQTALRRVLGEHVKQAGSLVAPDRLRFDFTHFAAMTPEEIRRVEEIVNTFIMENDTVHAREMAVEEAMESGATALFGEKYGDRVRVVKVGEVSAELCGGTHVRAAGDIGSFKILSEAGIAAGVRRIEALTGMGALRHIQELEDEKRQIAALMKAEGGDNIDRLQKLLARQREMQREIETLQGQLNAAKSGDLLADVREVNGVKVLATKVEVDDPKKLRELADTLKDRLGSGVVALGCEKDGRANLLVAVTKDLAGRIRAGDIIRQLAPVIGGSGGGKPELAQAGGSQPDMLAEALGKVYGLIG.

Positions 568, 572, 670, and 674 each coordinate Zn(2+).

Belongs to the class-II aminoacyl-tRNA synthetase family. The cofactor is Zn(2+).

It is found in the cytoplasm. It carries out the reaction tRNA(Ala) + L-alanine + ATP = L-alanyl-tRNA(Ala) + AMP + diphosphate. Catalyzes the attachment of alanine to tRNA(Ala) in a two-step reaction: alanine is first activated by ATP to form Ala-AMP and then transferred to the acceptor end of tRNA(Ala). Also edits incorrectly charged Ser-tRNA(Ala) and Gly-tRNA(Ala) via its editing domain. This chain is Alanine--tRNA ligase, found in Geobacter metallireducens (strain ATCC 53774 / DSM 7210 / GS-15).